The following is a 94-amino-acid chain: MIKSELVQIIASRNPHLFQRDVENIVGAVFDEITNALAEGNRVELRGFGAFSVKNRPARSGRNPRTGETVDVEEKWVPFFKTGKELRDRLNGAV.

This sequence belongs to the bacterial histone-like protein family. Heterodimer of an alpha and a beta chain.

This protein is one of the two subunits of integration host factor, a specific DNA-binding protein that functions in genetic recombination as well as in transcriptional and translational control. In Brucella anthropi (strain ATCC 49188 / DSM 6882 / CCUG 24695 / JCM 21032 / LMG 3331 / NBRC 15819 / NCTC 12168 / Alc 37) (Ochrobactrum anthropi), this protein is Integration host factor subunit beta.